The primary structure comprises 62 residues: DNA gyrase inhibitor YacG (62 aa).

Zn(2+)-binding residues include C8, C11, C27, and C31.

It belongs to the DNA gyrase inhibitor YacG family. Interacts with GyrB. Requires Zn(2+) as cofactor.

In terms of biological role, inhibits all the catalytic activities of DNA gyrase by preventing its interaction with DNA. Acts by binding directly to the C-terminal domain of GyrB, which probably disrupts DNA binding by the gyrase. The sequence is that of DNA gyrase inhibitor YacG from Actinobacillus pleuropneumoniae serotype 5b (strain L20).